We begin with the raw amino-acid sequence, 2271 residues long: Serine-rich adhesin for platelets (2271 aa).

Residues 1-89 (MSKRQKAFHD…VNMLHDQQAF (89 aa)) form the signal peptide. Residues 90 to 230 (AASDAPLTSE…KTSTTSTSTA (141 aa)) are serine-rich repeat region 1, SRR1. Over residues 100-111 (LNTQSETVGNQN) the composition is skewed to polar residues. 3 disordered regions span residues 100 to 229 (LNTQ…STST), 751 to 791 (NSMS…VVST), and 806 to 2243 (SVSA…GLLG). The span at 112–128 (STTIEASTSTADSTSVT) shows a compositional bias: low complexity. A compositionally biased stretch (polar residues) spans 129–140 (KNSSSVQTSNSD). Residues 150-229 (VTSTTNSTSN…NKTSTTSTST (80 aa)) show a composition bias toward low complexity. The interval 231 to 751 (PVKLRTFSRL…TTFKYEVTRN (521 aa)) is non-repeat region (NRR). Composition is skewed to low complexity over residues 752–791 (SMSDSVSTSGSTQQSQSVSTSKADSQSASTSTSGSIVVST), 806–1392 (SVSA…LSLS), and 1402–2214 (SNSA…ATSE). Positions 752–2232 (SMSDSVSTSG…AQSEKRLPDT (1481 aa)) are serine-rich repeat region 2, SRR2. Positions 2229–2233 (LPDTG) match the LPXTG sorting signal motif. T2232 bears the Pentaglycyl murein peptidoglycan amidated threonine mark. Residues 2233–2271 (GDSIKQNGLLGGVMTLLVGLGLMKRKKKKDENDQDDSQA) constitute a propeptide, removed by sortase.

This sequence belongs to the serine-rich repeat protein (SRRP) family. Proteolytically cleaved by a metalloprotease. Post-translationally, glycosylated. It is probable that most of the Ser residues in SSR1 and SSR2 are O-GlcNAcylated. Sequential glycosylation by sugar transferases are able to generate complex sugar polymorphisms.

The protein localises to the secreted. It localises to the cell wall. In terms of biological role, mediates binding to human platelets, possibly through a receptor-ligand interaction. Probably associated with virulence in endovascular infection. The chain is Serine-rich adhesin for platelets (sraP) from Staphylococcus aureus (strain USA300).